Here is a 204-residue protein sequence, read N- to C-terminus: Cytochrome c biogenesis ATP-binding export protein CcmA (204 aa).

Residues 2 to 202 (LEIRNVTCIR…DSNELKKIRL (201 aa)) enclose the ABC transporter domain. 34–41 (GQNGAGKT) serves as a coordination point for ATP.

Belongs to the ABC transporter superfamily. CcmA exporter (TC 3.A.1.107) family. As to quaternary structure, the complex is composed of two ATP-binding proteins (CcmA) and two transmembrane proteins (CcmB).

It is found in the cell inner membrane. It catalyses the reaction heme b(in) + ATP + H2O = heme b(out) + ADP + phosphate + H(+). In terms of biological role, part of the ABC transporter complex CcmAB involved in the biogenesis of c-type cytochromes; once thought to export heme, this seems not to be the case, but its exact role is uncertain. Responsible for energy coupling to the transport system. In Aliivibrio fischeri (strain ATCC 700601 / ES114) (Vibrio fischeri), this protein is Cytochrome c biogenesis ATP-binding export protein CcmA.